The chain runs to 208 residues: Guanylate kinase (208 aa).

Positions 5 to 184 constitute a Guanylate kinase-like domain; it reads GLLIVFSGPS…AAERVKCVIE (180 aa). 12–19 serves as a coordination point for ATP; it reads GPSGVGKG.

It belongs to the guanylate kinase family.

It is found in the cytoplasm. The enzyme catalyses GMP + ATP = GDP + ADP. In terms of biological role, essential for recycling GMP and indirectly, cGMP. The polypeptide is Guanylate kinase (Streptococcus pneumoniae serotype 4 (strain ATCC BAA-334 / TIGR4)).